We begin with the raw amino-acid sequence, 533 residues long: Protein translocase subunit SecD (533 aa).

The next 6 helical transmembrane spans lie at 8-28, 377-397, 400-420, 422-442, 469-489, and 495-515; these read ALLV…TFVS, IVGG…GGVV, LALA…GFTL, LPGI…NVLI, LTIL…LQFG, and GFAV…IFVT.

This sequence belongs to the SecD/SecF family. SecD subfamily. As to quaternary structure, forms a complex with SecF. Part of the essential Sec protein translocation apparatus which comprises SecA, SecYEG and auxiliary proteins SecDF-YajC and YidC.

It localises to the cell inner membrane. Its function is as follows. Part of the Sec protein translocase complex. Interacts with the SecYEG preprotein conducting channel. SecDF uses the proton motive force (PMF) to complete protein translocation after the ATP-dependent function of SecA. This Syntrophobacter fumaroxidans (strain DSM 10017 / MPOB) protein is Protein translocase subunit SecD.